Consider the following 289-residue polypeptide: Purine nucleoside phosphorylase (289 aa).

Methionine 1 carries the post-translational modification N-acetylmethionine. Phosphate contacts are provided by residues serine 33, histidine 64, and arginine 84 to histidine 86. Residue tyrosine 88 coordinates a purine D-ribonucleoside. Alanine 116 provides a ligand contact to phosphate. A purine D-ribonucleoside-binding residues include glutamate 201 and methionine 219. Serine 220 is a phosphate binding site. Asparagine 243 contributes to the a purine D-ribonucleoside binding site. Serine 251 carries the phosphoserine modification. Position 257 (histidine 257) interacts with a purine D-ribonucleoside.

This sequence belongs to the PNP/MTAP phosphorylase family. As to quaternary structure, homotrimer. Expressed in red blood cells; overexpressed in red blood cells (cytoplasm) of patients with hereditary non-spherocytic hemolytic anemia of unknown etiology.

The protein resides in the cytoplasm. The enzyme catalyses inosine + phosphate = alpha-D-ribose 1-phosphate + hypoxanthine. It catalyses the reaction guanosine + phosphate = alpha-D-ribose 1-phosphate + guanine. The catalysed reaction is 2'-deoxyguanosine + phosphate = 2-deoxy-alpha-D-ribose 1-phosphate + guanine. It carries out the reaction 2'-deoxyinosine + phosphate = 2-deoxy-alpha-D-ribose 1-phosphate + hypoxanthine. It functions in the pathway purine metabolism; purine nucleoside salvage. With respect to regulation, inhibited by 5'-deaza-1'-aza-2c-deoxy-1'-(9-methylene)-Immucilin-G (DADMe-ImmG). Its function is as follows. Catalyzes the phosphorolytic breakdown of the N-glycosidic bond in the beta-(deoxy)ribonucleoside molecules, with the formation of the corresponding free purine bases and pentose-1-phosphate. Preferentially acts on 6-oxopurine nucleosides including inosine and guanosine. The polypeptide is Purine nucleoside phosphorylase (PNP) (Homo sapiens (Human)).